Consider the following 213-residue polypeptide: MKYIIEHMEEGFSEWVILEYSQILREVGAENLILSSLPESTTEKDIPQRLLKLGLRWTTKDLKGINEDFKDLELLKDGRVCLLDPRATIDLQPEDATKFDYFVFGGILGDHPPRDRTKELKTAYPNLLISRRLGDKQMTTDTAIRTTQLIIKDRIAFEDIKFIDYPEFRFNKNEATEMPFRYVLDKEGKPILPEGMLDLIKKDSAQSLDDLLM.

2 positions are modified to phosphoserine: Ser204 and Ser207.

Belongs to the class IV-like SAM-binding methyltransferase superfamily. Protein arginine N-methyltransferase SFM1 family.

The protein resides in the cytoplasm. Functionally, S-adenosyl-L-methionine-dependent protein-arginine N-methyltransferase that monomethylates ribosomal protein S3 (RPS3) at 'Arg-146'. In Saccharomyces cerevisiae (strain ATCC 204508 / S288c) (Baker's yeast), this protein is Protein arginine N-methyltransferase SFM1.